A 138-amino-acid chain; its full sequence is Large-conductance mechanosensitive channel (138 aa).

3 consecutive transmembrane segments (helical) span residues 19–39 (VGVIIGGAFGAIVTSLVGDII), 40–60 (MPIIGAITGGLDFSNYFIPLA), and 81–101 (GSFLTLTLNFFIVAFVLFMVI).

The protein belongs to the MscL family. In terms of assembly, homopentamer.

Its subcellular location is the cell inner membrane. Channel that opens in response to stretch forces in the membrane lipid bilayer. May participate in the regulation of osmotic pressure changes within the cell. This is Large-conductance mechanosensitive channel from Bradyrhizobium sp. (strain ORS 278).